The chain runs to 469 residues: Glutamine synthetase (469 aa).

The 86-residue stretch at Asn14–Gly99 folds into the GS beta-grasp domain. Residues Pro106 to Val469 form the GS catalytic domain. Mg(2+) contacts are provided by Glu131 and Glu133. Glu209 lines the ATP pocket. Mg(2+) contacts are provided by Glu214 and Glu221. L-glutamate-binding positions include Asn265–Gly266 and Gly266. Residue His270 participates in Mg(2+) binding. Residues His272–Ser274 and Ser274 each bind ATP. L-glutamate-binding residues include Arg322, Glu328, and Arg340. Residues Arg340, Arg345, and Lys353 each contribute to the ATP site. Glu358 is a Mg(2+) binding site. Arg360 serves as a coordination point for L-glutamate. Tyr398 bears the O-AMP-tyrosine mark.

This sequence belongs to the glutamine synthetase family. In terms of assembly, oligomer of 12 subunits arranged in the form of two hexameric ring. It depends on Mg(2+) as a cofactor.

The protein localises to the cytoplasm. The catalysed reaction is L-glutamate + NH4(+) + ATP = L-glutamine + ADP + phosphate + H(+). With respect to regulation, the activity of this enzyme could be controlled by adenylation under conditions of abundant glutamine. In terms of biological role, catalyzes the ATP-dependent biosynthesis of glutamine from glutamate and ammonia. The sequence is that of Glutamine synthetase from Rhizobium meliloti (strain 1021) (Ensifer meliloti).